Reading from the N-terminus, the 277-residue chain is Polar tube protein 2 (277 aa).

A signal peptide spans 1–18; that stretch reads MLLLLAITAVVSATMVHP. N-linked (GlcNAc...) asparagine glycosylation is present at Asn134. Residues 237 to 251 are compositionally biased toward basic and acidic residues; it reads QKKEVKDTKEGEKSA. A disordered region spans residues 237–277; that stretch reads QKKEVKDTKEGEKSASQDSDGEGTAEDAEVQQPSADGEGLE. Residues 255-265 show a composition bias toward acidic residues; that stretch reads SDGEGTAEDAE.

Interacts with PTP1 and PTP3.

Its subcellular location is the spore polar tube. In terms of biological role, involved in formation of a polar tube through which the infectious agent is passed on to the host cell. The polypeptide is Polar tube protein 2 (PTP2) (Encephalitozoon cuniculi (strain GB-M1) (Microsporidian parasite)).